The sequence spans 307 residues: Methionyl-tRNA formyltransferase (307 aa).

A (6S)-5,6,7,8-tetrahydrofolate-binding site is contributed by 109 to 112 (SMLP).

Belongs to the Fmt family.

It catalyses the reaction L-methionyl-tRNA(fMet) + (6R)-10-formyltetrahydrofolate = N-formyl-L-methionyl-tRNA(fMet) + (6S)-5,6,7,8-tetrahydrofolate + H(+). Its function is as follows. Attaches a formyl group to the free amino group of methionyl-tRNA(fMet). The formyl group appears to play a dual role in the initiator identity of N-formylmethionyl-tRNA by promoting its recognition by IF2 and preventing the misappropriation of this tRNA by the elongation apparatus. The polypeptide is Methionyl-tRNA formyltransferase (Orientia tsutsugamushi (strain Boryong) (Rickettsia tsutsugamushi)).